Consider the following 579-residue polypeptide: Salivary alpha-glucosidase (579 aa).

The N-terminal stretch at 1–18 is a signal peptide; that stretch reads MKIFVPLLSFLLAGLTTG. Residues D37, D39, D41, I43, D45, and N118 each coordinate Ca(2+). N-linked (GlcNAc...) asparagine glycans are attached at residues N118 and N151. A Ca(2+)-binding site is contributed by D189. Residue D219 is the Nucleophile of the active site. Residues Y223, L224, and E226 each contribute to the Ca(2+) site. The N-linked (GlcNAc...) asparagine glycan is linked to N282. Catalysis depends on E290, which acts as the Proton donor. N-linked (GlcNAc...) asparagine glycosylation is found at N304, N325, and N401. N325 lines the N-acetyl-beta-D-glucosamine pocket.

It belongs to the glycosyl hydrolase 13 family. Saliva (at protein level). Proximal lateral lobes of the salivary gland (at protein level).

The protein localises to the secreted. It carries out the reaction Hydrolysis of terminal, non-reducing (1-&gt;4)-linked alpha-D-glucose residues with release of alpha-D-glucose.. In terms of biological role, functions as a glucosidase that shows high activity toward sucrose, a major component of nectar. Assists the mosquito in its sugar-feeding capabilities. In Aedes aegypti (Yellowfever mosquito), this protein is Salivary alpha-glucosidase.